Here is a 323-residue protein sequence, read N- to C-terminus: GMP reductase (323 aa).

The active-site Thioimidate intermediate is the cysteine 174. 203-226 (IIADGGIRHNGDIAKSVRFGASMV) serves as a coordination point for NADP(+).

It belongs to the IMPDH/GMPR family. GuaC type 2 subfamily.

It catalyses the reaction IMP + NH4(+) + NADP(+) = GMP + NADPH + 2 H(+). Its function is as follows. Catalyzes the irreversible NADPH-dependent deamination of GMP to IMP. It functions in the conversion of nucleobase, nucleoside and nucleotide derivatives of G to A nucleotides, and in maintaining the intracellular balance of A and G nucleotides. This chain is GMP reductase, found in Oenococcus oeni (strain ATCC BAA-331 / PSU-1).